A 143-amino-acid chain; its full sequence is Large ribosomal subunit protein uL16c (143 aa).

The protein belongs to the universal ribosomal protein uL16 family. Part of the 50S ribosomal subunit.

Its subcellular location is the plastid. The protein localises to the chloroplast. The polypeptide is Large ribosomal subunit protein uL16c (Marchantia polymorpha (Common liverwort)).